Consider the following 531-residue polypeptide: Glucose-6-phosphate exchanger SLC37A1 (531 aa).

A helical membrane pass occupies residues 18–38 (QWYRAFIFMLTFLLYASFHLS). The tract at residues 53–72 (CTAGDGPESPFSDPSSSTRH) is disordered. The next 11 membrane-spanning stretches (helical) occupy residues 100–120 (GALDYAFLCAYAIGMYLSGII), 129–149 (YLTFGMLASGAFTALFGLGYF), 157–177 (FYVVTQIINGLVQTTGWPSVV), 192–214 (IMGIWNSHTSVGNILGSLIAGYW), 222–242 (SFIVPGAIVAAMGIVCFLFLI), 332–352 (LCLLFAKLVSYTFLFWLPLYI), 364–384 (GELSTLFDVGGIFGGILAGVI), 392–412 (ASTCGLMLLLAAPTLYVFSSV), 419–439 (ATIAMLLLSGALVSGPYALIT), 464–484 (AIIDGTGSVGAALGPLLAGLI), and 488–508 (GWSNVFYMLMFADACALLFLV).

It belongs to the major facilitator superfamily. Organophosphate:Pi antiporter (OPA) (TC 2.A.1.4) family.

The protein localises to the endoplasmic reticulum membrane. It catalyses the reaction D-glucose 6-phosphate(in) + phosphate(out) = D-glucose 6-phosphate(out) + phosphate(in). Its activity is regulated as follows. Inhibited by vanadate but not by chlorogenic acid. In terms of biological role, inorganic phosphate and glucose-6-phosphate antiporter. May transport cytoplasmic glucose-6-phosphate into the lumen of the endoplasmic reticulum and translocate inorganic phosphate into the opposite direction. Independent of a lumenal glucose-6-phosphatase. May not play a role in homeostatic regulation of blood glucose levels. In Mus musculus (Mouse), this protein is Glucose-6-phosphate exchanger SLC37A1.